The chain runs to 380 residues: tRNA(Met) cytidine acetate ligase (380 aa).

ATP contacts are provided by residues 7-20 (ITEYNPFHNGHLYH), G100, N153, and R178.

It belongs to the TmcAL family.

The protein resides in the cytoplasm. It catalyses the reaction cytidine(34) in elongator tRNA(Met) + acetate + ATP = N(4)-acetylcytidine(34) in elongator tRNA(Met) + AMP + diphosphate. Its function is as follows. Catalyzes the formation of N(4)-acetylcytidine (ac(4)C) at the wobble position of elongator tRNA(Met), using acetate and ATP as substrates. First activates an acetate ion to form acetyladenylate (Ac-AMP) and then transfers the acetyl group to tRNA to form ac(4)C34. The sequence is that of tRNA(Met) cytidine acetate ligase from Staphylococcus haemolyticus (strain JCSC1435).